The chain runs to 457 residues: ERV-H1 provirus ancestral Env polyprotein (457 aa).

A signal peptide spans 1–35 (MIFAGKAPSNTSTLMKFYSLILYSLLFSFPFLCHP). Residues N10 and N47 are each glycosylated (N-linked (GlcNAc...) asparagine). Residues 64-67 (CWLC) carry the CXXC motif. 6 N-linked (GlcNAc...) asparagine glycosylation sites follow: N197, N222, N265, N283, N352, and N370. Residues 388–408 (VIPLIPLMFGLGLSASTIALS) form a fusion peptide region.

Belongs to the gamma type-C retroviral envelope protein family. HERV class-I H env subfamily. The surface (SU) and transmembrane (TM) proteins form a heterodimer. SU and TM are attached by noncovalent interactions or by a labile interchain disulfide bond. In terms of processing, specific enzymatic cleavages in vivo yield the mature SU and TM proteins. The CXXC motif is highly conserved across a broad range of retroviral envelope proteins. It is thought to participate in the formation of a labile disulfide bond possibly with the CX6CC motif present in the transmembrane protein.

The protein resides in the virion. In terms of biological role, retroviral envelope proteins mediate receptor recognition and membrane fusion during early infection. Endogenous envelope proteins may have kept, lost or modified their original function during evolution. Its function is as follows. SU mediates receptor recognition. Functionally, TM anchors the envelope heterodimer to the viral membrane through one transmembrane domain. The other hydrophobic domain, called fusion peptide, mediates fusion of the viral membrane with the target cell membrane. The chain is ERV-H1 provirus ancestral Env polyprotein from Pan troglodytes (Chimpanzee).